The following is a 361-amino-acid chain: MTVPHIPRGPVMADIAAFRLTEEEKQRLLDPAVGGIILFRRNFQNIEQLKTLTAEIKALRTPELIIAVDHEGGRVQRFIEGFTRLPAMSTLGEIWDKDGASAAETAAGQVGRVLATELSACGIDLSFTPVLDLDWGNCPVIGNRSFHRNPEAVARLALALQKGLTKGGMKSCGKHFPGHGFVEGDSHLVLPEDWRSLSELETADLAPFRIMSREGMAAVMPAHVVYPQVDTKPAGFSEIWLKQILRRDIGFKGVIFSDDLTMEGACGAGGIKERARISFEAGCDIVLVCNRPDLVDELREDFRIPDNPTLAQRWQYMANTLGSAAAQAVMQTADFQAAQAFVAGLASPQDTAGGVKVGEAF.

Residues Asp-69, Arg-77, Arg-144, and Lys-174–His-175 contribute to the substrate site. The active-site Proton donor/acceptor is the His-187. The Nucleophile role is filled by Asp-258.

The protein belongs to the glycosyl hydrolase 3 family. NagZ subfamily.

It localises to the cytoplasm. The enzyme catalyses Hydrolysis of terminal non-reducing N-acetyl-D-hexosamine residues in N-acetyl-beta-D-hexosaminides.. It functions in the pathway cell wall biogenesis; peptidoglycan recycling. In terms of biological role, plays a role in peptidoglycan recycling by cleaving the terminal beta-1,4-linked N-acetylglucosamine (GlcNAc) from peptide-linked peptidoglycan fragments, giving rise to free GlcNAc, anhydro-N-acetylmuramic acid and anhydro-N-acetylmuramic acid-linked peptides. The chain is Beta-hexosaminidase from Neisseria meningitidis serogroup B (strain ATCC BAA-335 / MC58).